The primary structure comprises 72 residues: UPF0270 protein plu0398 (72 aa).

Belongs to the UPF0270 family.

The polypeptide is UPF0270 protein plu0398 (Photorhabdus laumondii subsp. laumondii (strain DSM 15139 / CIP 105565 / TT01) (Photorhabdus luminescens subsp. laumondii)).